A 295-amino-acid polypeptide reads, in one-letter code: Porphobilinogen deaminase (295 aa).

Residue Cys-241 is modified to S-(dipyrrolylmethanemethyl)cysteine.

It belongs to the HMBS family. As to quaternary structure, monomer. Dipyrromethane is required as a cofactor.

It catalyses the reaction 4 porphobilinogen + H2O = hydroxymethylbilane + 4 NH4(+). Its pathway is porphyrin-containing compound metabolism; protoporphyrin-IX biosynthesis; coproporphyrinogen-III from 5-aminolevulinate: step 2/4. Functionally, tetrapolymerization of the monopyrrole PBG into the hydroxymethylbilane pre-uroporphyrinogen in several discrete steps. This is Porphobilinogen deaminase from Lachnospira eligens (strain ATCC 27750 / DSM 3376 / VPI C15-48 / C15-B4) (Eubacterium eligens).